A 573-amino-acid polypeptide reads, in one-letter code: Putative ATP-dependent RNA helicase R563 (573 aa).

Residues 57–233 (INPKTPYKGL…ALTMNLLVRN (177 aa)) form the Helicase ATP-binding domain. An ATP-binding site is contributed by 70–77 (HRIGAGKT). The DEAH box signature appears at 179–182 (DEVH). The Helicase C-terminal domain maps to 374–551 (KILRKIKRCN…AFEKALKEAA (178 aa)).

Belongs to the DEAD box helicase family. DEAH subfamily.

It is found in the virion. The enzyme catalyses ATP + H2O = ADP + phosphate + H(+). The sequence is that of Putative ATP-dependent RNA helicase R563 from Acanthamoeba polyphaga mimivirus (APMV).